Reading from the N-terminus, the 213-residue chain is Outer-membrane lipoprotein carrier protein (213 aa).

The signal sequence occupies residues 1 to 23 (MKKLLKQSLLGFALVSMTGAAFA).

Belongs to the LolA family. In terms of assembly, monomer.

The protein resides in the periplasm. Functionally, participates in the translocation of lipoproteins from the inner membrane to the outer membrane. Only forms a complex with a lipoprotein if the residue after the N-terminal Cys is not an aspartate (The Asp acts as a targeting signal to indicate that the lipoprotein should stay in the inner membrane). The sequence is that of Outer-membrane lipoprotein carrier protein from Actinobacillus pleuropneumoniae serotype 7 (strain AP76).